The chain runs to 98 residues: Integration host factor subunit alpha (98 aa).

The interval 49-70 (FGNFDLRDKNQRPGRNPKTGED) is disordered.

The protein belongs to the bacterial histone-like protein family. Heterodimer of an alpha and a beta chain.

Functionally, this protein is one of the two subunits of integration host factor, a specific DNA-binding protein that functions in genetic recombination as well as in transcriptional and translational control. This chain is Integration host factor subunit alpha, found in Sodalis glossinidius (strain morsitans).